Here is a 546-residue protein sequence, read N- to C-terminus: 2-isopropylmalate synthase (546 aa).

A Pyruvate carboxyltransferase domain is found at 8–271; it reads ILIFDTTLRD…NSFFGRSSDS (264 aa). Positions 17, 208, 210, and 244 each coordinate Mn(2+). Positions 408–546 are regulatory domain; it reads QLSHVQVSCG…EKKVFSNPKN (139 aa).

This sequence belongs to the alpha-IPM synthase/homocitrate synthase family. LeuA type 1 subfamily. Homodimer. Requires Mn(2+) as cofactor.

It localises to the cytoplasm. It catalyses the reaction 3-methyl-2-oxobutanoate + acetyl-CoA + H2O = (2S)-2-isopropylmalate + CoA + H(+). It participates in amino-acid biosynthesis; L-leucine biosynthesis; L-leucine from 3-methyl-2-oxobutanoate: step 1/4. Its function is as follows. Catalyzes the condensation of the acetyl group of acetyl-CoA with 3-methyl-2-oxobutanoate (2-ketoisovalerate) to form 3-carboxy-3-hydroxy-4-methylpentanoate (2-isopropylmalate). The sequence is that of 2-isopropylmalate synthase from Prochlorococcus marinus (strain MIT 9515).